Here is a 374-residue protein sequence, read N- to C-terminus: Growth/differentiation factor 8 (374 aa).

The signal sequence occupies residues 1 to 22 (MHFTQVLISLSVLIACGPVGYG). Positions 23–265 (DITAHQQPST…ISEGPKRIRR (243 aa)) are excised as a propeptide. 2 N-linked (GlcNAc...) asparagine glycosylation sites follow: asparagine 72 and asparagine 274. Intrachain disulfides connect cysteine 271–cysteine 281, cysteine 280–cysteine 339, cysteine 308–cysteine 371, and cysteine 312–cysteine 373.

It belongs to the TGF-beta family. As to quaternary structure, homodimer; disulfide-linked. Predominantly expressed in muscle. At hatching, expression is strongest in the skin epithelium, and is also found in the retina and brain. From day 28, expressed in skeletal muscle. In the adult, highest expression is seen in the gastrointestinal tract, brain, muscle, heart and testis. Also expressed in the adult pharynx, kidney, spleen, liver, gill, eyes, skin, swim bladder and ovary.

The protein resides in the secreted. Functionally, acts specifically as a negative regulator of skeletal muscle growth. May down-regulate muscle-specific transcription factors such as myod and myog. The protein is Growth/differentiation factor 8 (mstnb) of Danio rerio (Zebrafish).